The sequence spans 839 residues: Small conductance calcium-activated potassium channel protein 2 (839 aa).

Disordered regions lie at residues 1-33 (MPIVLVRPTNRTRRLDSTGAGMGPSSHQQQESP), 64-115 (QRGF…QQPG), 195-258 (ALRQ…RRES), and 280-375 (SNLS…KKNQ). 2 stretches are compositionally biased toward low complexity: residues 198 to 212 (QQYAQQPASASQYHQ) and 219 to 235 (ATSPTGSLGSLGSGPPL). Residues 236-253 (SHHHHHPHPAHHQHHQPQ) are compositionally biased toward basic residues. Residues 313–326 (SSPSAAAAASSSAP) are compositionally biased toward low complexity. A compositionally biased stretch (gly residues) spans 345–363 (GTGGGGSTGGGGGGSGHGS). Residues 398 to 418 (ALIFGMFGIVVMVIETELSWG) traverse the membrane as a helical segment. Residue Y420 is modified to Phosphotyrosine. The chain crosses the membrane as a helical span at residues 428 to 448 (LALKCLISLSTIILLGLIIVY). A helical membrane pass occupies residues 474 to 494 (IFFICLEILVCAIHPIPGNYT). Residues 516–536 (IILSIPMFLRLYLIARVMLLH) traverse the membrane as a helical segment. Residues 565–585 (LMTICPGTVLLVFSISLWIIA) form a helical membrane-spanning segment. Residues 605 to 625 (FLGAMWLISITFLSIGYGDMV) constitute an intramembrane region (pore-forming). Residues 634 to 654 (VCLLTGIMGAGCTALVVAVVA) form a helical membrane-spanning segment. A calmodulin-binding region spans residues 672-748 (DTQLTKRVKN…LVDLAKTQNI (77 aa)). Basic and acidic residues predominate over residues 810 to 819 (HVSYNAERSR). The interval 810-839 (HVSYNAERSRSSSRRRRSSSTAPPTSSESS) is disordered. The segment covering 828-839 (SSTAPPTSSESS) has biased composition (low complexity).

It belongs to the potassium channel KCNN family. KCa2.2/KCNN2 subfamily. In terms of assembly, homodimer. Heteromultimer with KCNN1 and KCNN3. The complex is composed of 4 channel subunits each of which binds to a calmodulin subunit which regulates the channel activity through calcium-binding. Interacts (via N-terminal domain) with MPP2. As to expression, expressed in atrial and ventricular myocytes with higher levels in atrial myocytes (at protein level). Highly expressed in brain, liver and colon with low levels in kidney and testis. In colon, detected in smooth muscle cells.

The protein localises to the membrane. It localises to the cytoplasm. Its subcellular location is the myofibril. The protein resides in the sarcomere. It is found in the z line. The enzyme catalyses K(+)(in) = K(+)(out). Inhibited by bee venom neurotoxin apamin. Inhibited by UCL 1684 and tetraethylammonium (TEA). Its function is as follows. Small conductance calcium-activated potassium channel that mediates the voltage-independent transmembrane transfer of potassium across the cell membrane through a constitutive interaction with calmodulin which binds the intracellular calcium allowing its opening. The current is characterized by a voltage-independent activation, an intracellular calcium concentration increase-dependent activation and a single-channel conductance of about 3 picosiemens. Also presents an inwardly rectifying current, thus reducing its already small outward conductance of potassium ions, which is particularly the case when the membrane potential displays positive values, above + 20 mV. The inward rectification could be due to a blockade of the outward current by intracellular divalent cations such as calcium and magnesium and could also be due to an intrinsic property of the channel pore, independent of intracellular divalent ions. There are three positively charged amino acids in the S6 transmembrane domain, close to the pore, that collectively control the conductance and rectification through an electrostatic mechanism. Additionally, electrostatic contributions from these residues also play an important role in determining the intrinsic open probability of the channel in the absence of calcium, affecting the apparent calcium affinity for activation. Forms an heteromeric complex with calmodulin, which is constitutively associated in a calcium-independent manner. Channel opening is triggered when calcium binds the calmodulin resulting in a rotary movement leading to the formation of the dimeric complex to open the gate. Plays a role in the repolarization phase of cardiac action potential. This Mus musculus (Mouse) protein is Small conductance calcium-activated potassium channel protein 2.